A 92-amino-acid polypeptide reads, in one-letter code: DNA-binding protein HU-alpha (92 aa).

Belongs to the bacterial histone-like protein family. In terms of assembly, heterodimer of an alpha and a beta chain.

Its function is as follows. Histone-like DNA-binding protein which is capable of wrapping DNA to stabilize it, and thus to prevent its denaturation under extreme environmental conditions. The polypeptide is DNA-binding protein HU-alpha (hupA) (Burkholderia pseudomallei (strain K96243)).